The chain runs to 514 residues: Maturase K (514 aa).

The protein belongs to the intron maturase 2 family. MatK subfamily.

The protein resides in the plastid. It localises to the chloroplast. In terms of biological role, usually encoded in the trnK tRNA gene intron. Probably assists in splicing its own and other chloroplast group II introns. The sequence is that of Maturase K from Phoenix dactylifera (Date palm).